The chain runs to 358 residues: Probable D-xylulose reductase A (358 aa).

Positions 47, 72, and 73 each coordinate Zn(2+). NAD(+) is bound at residue 182 to 187; that stretch reads GAGPVG.

Belongs to the zinc-containing alcohol dehydrogenase family. The cofactor is Zn(2+).

It catalyses the reaction xylitol + NAD(+) = D-xylulose + NADH + H(+). It functions in the pathway carbohydrate degradation; L-arabinose degradation via L-arabinitol; D-xylulose 5-phosphate from L-arabinose (fungal route): step 4/5. In terms of biological role, xylitol dehydrogenase which catalyzes the conversion of xylitol to D-xylulose. Xylose is a major component of hemicelluloses such as xylan. Most fungi utilize D-xylose via three enzymatic reactions, xylose reductase (XR), xylitol dehydrogenase (XDH), and xylulokinase, to form xylulose 5-phosphate, which enters pentose phosphate pathway. The protein is Probable D-xylulose reductase A (xdhA) of Neosartorya fischeri (strain ATCC 1020 / DSM 3700 / CBS 544.65 / FGSC A1164 / JCM 1740 / NRRL 181 / WB 181) (Aspergillus fischerianus).